The sequence spans 344 residues: Anthranilate phosphoribosyltransferase (344 aa).

Residues Gly-85, 88–89, Thr-93, 95–98, 113–121, and Ser-125 each bind 5-phospho-alpha-D-ribose 1-diphosphate; these read GD, NIST, and KHGGRSVSS. Gly-85 is a binding site for anthranilate. Ser-97 contacts Mg(2+). Arg-171 contacts anthranilate. The Mg(2+) site is built by Asp-230 and Glu-231.

The protein belongs to the anthranilate phosphoribosyltransferase family. As to quaternary structure, homodimer. The cofactor is Mg(2+).

The catalysed reaction is N-(5-phospho-beta-D-ribosyl)anthranilate + diphosphate = 5-phospho-alpha-D-ribose 1-diphosphate + anthranilate. It participates in amino-acid biosynthesis; L-tryptophan biosynthesis; L-tryptophan from chorismate: step 2/5. Functionally, catalyzes the transfer of the phosphoribosyl group of 5-phosphorylribose-1-pyrophosphate (PRPP) to anthranilate to yield N-(5'-phosphoribosyl)-anthranilate (PRA). The chain is Anthranilate phosphoribosyltransferase from Acidovorax ebreus (strain TPSY) (Diaphorobacter sp. (strain TPSY)).